Here is a 423-residue protein sequence, read N- to C-terminus: SH2 domain-containing protein 5 (423 aa).

Residues 28–146 (AQYVGSFPVD…LLCRSFQLAY (119 aa)) form the PID domain. Residues 296–392 (WAFAGISRPC…LDMGRLNPTY (97 aa)) form the SH2 domain. The segment at 392–423 (YEEQDCGPPGRPPRTLRPLSHAKSEAELQGLG) is disordered.

As to quaternary structure, interacts with BCR.

Its subcellular location is the postsynaptic density. In terms of biological role, may be involved in synaptic plasticity regulation through the control of Rac-GTP levels. This is SH2 domain-containing protein 5 from Homo sapiens (Human).